The primary structure comprises 286 residues: 4-hydroxy-tetrahydrodipicolinate synthase 2 (286 aa).

A pyruvate-binding site is contributed by threonine 45. The active-site Proton donor/acceptor is the tyrosine 133. Catalysis depends on lysine 161, which acts as the Schiff-base intermediate with substrate. Isoleucine 203 is a binding site for pyruvate.

The protein belongs to the DapA family. Homotetramer; dimer of dimers.

It is found in the cytoplasm. The catalysed reaction is L-aspartate 4-semialdehyde + pyruvate = (2S,4S)-4-hydroxy-2,3,4,5-tetrahydrodipicolinate + H2O + H(+). It participates in amino-acid biosynthesis; L-lysine biosynthesis via DAP pathway; (S)-tetrahydrodipicolinate from L-aspartate: step 3/4. Functionally, catalyzes the condensation of (S)-aspartate-beta-semialdehyde [(S)-ASA] and pyruvate to 4-hydroxy-tetrahydrodipicolinate (HTPA). This chain is 4-hydroxy-tetrahydrodipicolinate synthase 2, found in Clostridium acetobutylicum (strain ATCC 824 / DSM 792 / JCM 1419 / IAM 19013 / LMG 5710 / NBRC 13948 / NRRL B-527 / VKM B-1787 / 2291 / W).